The primary structure comprises 241 residues: Uridylate kinase (241 aa).

15–18 (KLSG) contacts ATP. The segment at 23–28 (GAEGFG) is involved in allosteric activation by GTP. Gly57 contributes to the UMP binding site. Residues Gly58 and Arg62 each contribute to the ATP site. UMP is bound by residues Asp77 and 138–145 (TGNPFFTT). 3 residues coordinate ATP: Thr165, Tyr171, and Asp174.

Belongs to the UMP kinase family. In terms of assembly, homohexamer.

It localises to the cytoplasm. The catalysed reaction is UMP + ATP = UDP + ADP. Its pathway is pyrimidine metabolism; CTP biosynthesis via de novo pathway; UDP from UMP (UMPK route): step 1/1. Its activity is regulated as follows. Allosterically activated by GTP. Inhibited by UTP. Functionally, catalyzes the reversible phosphorylation of UMP to UDP. The sequence is that of Uridylate kinase from Yersinia pseudotuberculosis serotype O:1b (strain IP 31758).